A 279-amino-acid chain; its full sequence is Putative cysteine-rich repeat secretory protein 22 (279 aa).

A signal peptide spans 1 to 31 (MSSSSASKLLGSVLVFAMISVQIVFIHCVMS). Gnk2-homologous domains lie at 44–146 (YLHH…PINS) and 152–276 (YEYN…LYRF).

The protein belongs to the cysteine-rich repeat secretory protein family.

It localises to the secreted. The sequence is that of Putative cysteine-rich repeat secretory protein 22 (CRRSP22) from Arabidopsis thaliana (Mouse-ear cress).